The following is a 72-amino-acid chain: Translation initiation factor IF-1 2 (72 aa).

The S1-like domain maps to Met-1–Lys-72.

This sequence belongs to the IF-1 family. As to quaternary structure, component of the 30S ribosomal translation pre-initiation complex which assembles on the 30S ribosome in the order IF-2 and IF-3, IF-1 and N-formylmethionyl-tRNA(fMet); mRNA recruitment can occur at any time during PIC assembly.

It is found in the cytoplasm. One of the essential components for the initiation of protein synthesis. Stabilizes the binding of IF-2 and IF-3 on the 30S subunit to which N-formylmethionyl-tRNA(fMet) subsequently binds. Helps modulate mRNA selection, yielding the 30S pre-initiation complex (PIC). Upon addition of the 50S ribosomal subunit IF-1, IF-2 and IF-3 are released leaving the mature 70S translation initiation complex. This is Translation initiation factor IF-1 2 from Chromobacterium violaceum (strain ATCC 12472 / DSM 30191 / JCM 1249 / CCUG 213 / NBRC 12614 / NCIMB 9131 / NCTC 9757 / MK).